We begin with the raw amino-acid sequence, 201 residues long: Peptidyl-tRNA hydrolase (201 aa).

Tyrosine 17 contributes to the tRNA binding site. Histidine 22 acts as the Proton acceptor in catalysis. Residues tyrosine 68, asparagine 70, and asparagine 116 each coordinate tRNA.

It belongs to the PTH family. As to quaternary structure, monomer.

Its subcellular location is the cytoplasm. It catalyses the reaction an N-acyl-L-alpha-aminoacyl-tRNA + H2O = an N-acyl-L-amino acid + a tRNA + H(+). In terms of biological role, hydrolyzes ribosome-free peptidyl-tRNAs (with 1 or more amino acids incorporated), which drop off the ribosome during protein synthesis, or as a result of ribosome stalling. Functionally, catalyzes the release of premature peptidyl moieties from peptidyl-tRNA molecules trapped in stalled 50S ribosomal subunits, and thus maintains levels of free tRNAs and 50S ribosomes. The sequence is that of Peptidyl-tRNA hydrolase from Lawsonia intracellularis (strain PHE/MN1-00).